Here is a 321-residue protein sequence, read N- to C-terminus: Olfactory receptor 56B34 (321 aa).

Residues 1-36 (MGTALHETNSSEVHVSEFILLGFPGIHEFQIWLSLP) lie on the Extracellular side of the membrane. Residues 37–57 (MALLYIVALGANLLILITIYL) form a helical membrane-spanning segment. Residues 58-70 (EPTLHQPMYQFLG) are Cytoplasmic-facing. The helical transmembrane segment at 71-91 (ILAAVDIGLATTSMPKILAIL) threads the bilayer. Residues 92–105 (WFDAKTISLPECFA) are Extracellular-facing. Cysteine 103 and cysteine 185 are oxidised to a cystine. The helical transmembrane segment at 106-126 (QIYAIHTFMCMESGVFLCMAI) threads the bilayer. Topologically, residues 127–128 (DR) are cytoplasmic. The chain crosses the membrane as a helical span at residues 129 to 149 (YVAICYPLQYPSIVTEAFVIK). Over 150–207 (ATLSMLLRNGLLTIPVPVLAAQRQYCSRNEIDHCLCSNLGVISLACDDITVNRFYQLA) the chain is Extracellular. The chain crosses the membrane as a helical span at residues 208–228 (LAWLVVGSDMILVYASYALII). The Cytoplasmic segment spans residues 229 to 250 (RSVLRLNSTEAASKALSTCSSH). The chain crosses the membrane as a helical span at residues 251-271 (LILIMFYYTAIVIVSVTHLAG). Topologically, residues 272–275 (RRVP) are extracellular. The helical transmembrane segment at 276–296 (LIPVLLNVMHIVIPPSLNPVV) threads the bilayer. Residues 297–321 (YALRTQELKVGFRKVFSLSEFVSRK) lie on the Cytoplasmic side of the membrane.

It belongs to the G-protein coupled receptor 1 family.

It localises to the cell membrane. Functionally, odorant receptor. The polypeptide is Olfactory receptor 56B34 (Mus musculus (Mouse)).